A 244-amino-acid polypeptide reads, in one-letter code: tRNA pseudouridine synthase A (244 aa).

Residue Asp-52 is the Nucleophile of the active site. Tyr-110 lines the substrate pocket.

The protein belongs to the tRNA pseudouridine synthase TruA family. As to quaternary structure, homodimer.

The enzyme catalyses uridine(38/39/40) in tRNA = pseudouridine(38/39/40) in tRNA. Its function is as follows. Formation of pseudouridine at positions 38, 39 and 40 in the anticodon stem and loop of transfer RNAs. This Caldicellulosiruptor saccharolyticus (strain ATCC 43494 / DSM 8903 / Tp8T 6331) protein is tRNA pseudouridine synthase A.